A 100-amino-acid chain; its full sequence is Small ribosomal subunit protein uS14c (100 aa).

It belongs to the universal ribosomal protein uS14 family. Part of the 30S ribosomal subunit.

Its subcellular location is the plastid. The protein resides in the chloroplast. Functionally, binds 16S rRNA, required for the assembly of 30S particles. This chain is Small ribosomal subunit protein uS14c, found in Rhodomonas salina (Cryptomonas salina).